The following is a 275-amino-acid chain: Nitrogenase iron protein (275 aa).

Glycine 9 to serine 16 serves as a coordination point for ATP. Position 97 (cysteine 97) interacts with [4Fe-4S] cluster. The residue at position 100 (arginine 100) is an ADP-ribosylarginine; by dinitrogenase reductase ADP-ribosyltransferase. [4Fe-4S] cluster is bound at residue cysteine 132.

The protein belongs to the NifH/BchL/ChlL family. In terms of assembly, homodimer. It depends on [4Fe-4S] cluster as a cofactor. In terms of processing, the reversible ADP-ribosylation of Arg-100 inactivates the nitrogenase reductase and regulates nitrogenase activity.

The catalysed reaction is N2 + 8 reduced [2Fe-2S]-[ferredoxin] + 16 ATP + 16 H2O = H2 + 8 oxidized [2Fe-2S]-[ferredoxin] + 2 NH4(+) + 16 ADP + 16 phosphate + 6 H(+). Functionally, the key enzymatic reactions in nitrogen fixation are catalyzed by the nitrogenase complex, which has 2 components: the iron protein and the molybdenum-iron protein. The protein is Nitrogenase iron protein (nifH) of Methanococcus maripaludis (Methanococcus deltae).